Consider the following 265-residue polypeptide: Asparagine-rich protein (265 aa).

A signal peptide spans 1 to 21 (MSRLTLLVLLVIAAVIQKVHG). 2 disordered regions span residues 20–71 (HGQG…NRNI) and 88–183 (SNQN…NQQY). Composition is skewed to basic and acidic residues over residues 22–35 (QGRENEKKNEHEPG) and 44–55 (EKTERNLREPNR). Low complexity predominate over residues 88–98 (SNQNNFGNNRS). Over residues 115–124 (NKSEVEKENG) the composition is skewed to basic and acidic residues. Over residues 152–166 (KVQHRIAKRFQKRHP) the composition is skewed to basic residues.

In terms of tissue distribution, nacreous layer of shell (at protein level). Expressed primarily in the mantle with highest level in the mantle pallium and lower level in the mantle edge.

Its subcellular location is the secreted. This is Asparagine-rich protein from Pinctada maxima (Silver-lipped pearl oyster).